We begin with the raw amino-acid sequence, 299 residues long: MNQVEMTEFPVGKPEEALYGVASTPDGALWFTLAKGNAIGRLSPDGEVSRFPLPHADGQPTTITCGPDGRPWFTLSSANAVGRLSPDGALRMFELPRPASRPFGIAAGHDGCLWFAEMAGDRIGRITIDGDIEEYDLPVKGGYPSCMAAGRDGLMWFTLNQAGAIGSISATAAPRIFPLGAADAAPVGIASDAQGALWIAQAGNGAIARFDAGGRITEFPLHSRAARPHALAADAAGNLWFTEWGANRIGRISEAGDTAGYELAAPGSEPHGIAIDPHGCVWAALETGSLVRLQASPRD.

His-229 lines the substrate pocket. Glu-269 lines the Mg(2+) pocket. The active-site Proton acceptor is His-271. Residue Glu-286 coordinates Mg(2+).

Belongs to the Vgb family. Monomer. Mg(2+) is required as a cofactor.

Inactivates the type B streptogramin antibiotics by linearizing the lactone ring at the ester linkage, generating a free phenylglycine carboxylate and converting the threonyl moiety into 2-amino-butenoic acid. The sequence is that of Virginiamycin B lyase (vgb) from Bordetella pertussis (strain Tohama I / ATCC BAA-589 / NCTC 13251).